The sequence spans 319 residues: Transcription factor bHLH111 (319 aa).

A disordered region spans residues 1–23 (MDHHHHIASRNSSTTSELPSFEP). Over residues 9–18 (SRNSSTTSEL) the composition is skewed to polar residues. Positions 195–244 (SEGSTLSPEKELPKAKLRDKITTLQQIVSPFGKTDTASVLQEAITYINFY) constitute a bHLH domain.

In terms of assembly, homodimer.

The protein resides in the nucleus. This chain is Transcription factor bHLH111 (BHLH111), found in Arabidopsis thaliana (Mouse-ear cress).